A 391-amino-acid chain; its full sequence is MSRFLICSFALVLLYPAGIDMYLVGLPRIAADLNASEAQLHIAFSVYLAGMAAAMLFAGKVADRSGRKPVAIPGAALFIITSVFCSLAETSTLFLAGRFLQGLGAGCCYVVAFAILRDTLDDRRRAKVLSLLNGITCIIPVLAPVLGHLIMLKFPWQSLFWTMAIMGIAVLMLSLFILKETRPAAPAASDKSRENSESLLNRFFLSRVVITTLSVSVILTFVNTSPVLLMEIMGFERGEYATIMALTAGVSMTVSFSTPFALGIFKPRTLMITSQVLFLAAGITLTVSPSHAVSLFGITLICAGFSVGFGVAMSQALGPFSLRAGVASSTLGIAQVCGSSLWIWLAAVVGISAWNMLIGILIACSIVSLLLIMFVAPGRPVTAHEEIHHHA.

Residues 1 to 3 (MSR) lie on the Cytoplasmic side of the membrane. The chain crosses the membrane as a helical span at residues 4–24 (FLICSFALVLLYPAGIDMYLV). Topologically, residues 25 to 41 (GLPRIAADLNASEAQLH) are periplasmic. The helical transmembrane segment at 42-62 (IAFSVYLAGMAAAMLFAGKVA) threads the bilayer. Topologically, residues 63–68 (DRSGRK) are cytoplasmic. The chain crosses the membrane as a helical span at residues 69–89 (PVAIPGAALFIITSVFCSLAE). The Periplasmic segment spans residues 90-92 (TST). A helical membrane pass occupies residues 93-113 (LFLAGRFLQGLGAGCCYVVAF). The Cytoplasmic segment spans residues 114–130 (AILRDTLDDRRRAKVLS). The helical transmembrane segment at 131–151 (LLNGITCIIPVLAPVLGHLIM) threads the bilayer. At 152-157 (LKFPWQ) the chain is on the periplasmic side. The chain crosses the membrane as a helical span at residues 158–178 (SLFWTMAIMGIAVLMLSLFIL). Topologically, residues 179–198 (KETRPAAPAASDKSRENSES) are cytoplasmic. The helical transmembrane segment at 199–221 (LLNRFFLSRVVITTLSVSVILTF) threads the bilayer. The Periplasmic segment spans residues 222–244 (VNTSPVLLMEIMGFERGEYATIM). Residues 245–265 (ALTAGVSMTVSFSTPFALGIF) form a helical membrane-spanning segment. Over 266 to 268 (KPR) the chain is Cytoplasmic. The helical transmembrane segment at 269–289 (TLMITSQVLFLAAGITLTVSP) threads the bilayer. Topologically, residues 290–292 (SHA) are periplasmic. The helical transmembrane segment at 293-313 (VSLFGITLICAGFSVGFGVAM) threads the bilayer. Residues 314 to 330 (SQALGPFSLRAGVASST) are Cytoplasmic-facing. The chain crosses the membrane as a helical span at residues 331–351 (LGIAQVCGSSLWIWLAAVVGI). The Periplasmic segment spans residues 352 to 355 (SAWN). The helical transmembrane segment at 356-376 (MLIGILIACSIVSLLLIMFVA) threads the bilayer. Over 377 to 391 (PGRPVTAHEEIHHHA) the chain is Cytoplasmic.

It belongs to the major facilitator superfamily. DHA1 family. MdtL (TC 2.A.1.2.22) subfamily.

It localises to the cell inner membrane. In terms of biological role, confers resistance to chloramphenicol. The sequence is that of Multidrug resistance protein MdtL (mdtL) from Escherichia coli O157:H7.